Consider the following 427-residue polypeptide: Zinc-finger homeodomain protein 7 (427 aa).

Disordered stretches follow at residues Met-1–Asp-60 and Leu-91–His-118. The segment covering Glu-10–Glu-28 has biased composition (acidic residues). Positions Ser-50–Asp-60 are enriched in low complexity. A ZF-HD dimerization-type; degenerate zinc finger spans residues Tyr-163–Glu-211. Disordered regions lie at residues Lys-264–Arg-320 and His-375–Ala-427. Composition is skewed to low complexity over residues Val-271–Ser-283 and His-301–Ala-312. Residues Lys-318–Pro-381 constitute a DNA-binding region (homeobox). Positions Pro-380–Pro-401 are enriched in pro residues. A compositionally biased stretch (basic residues) spans Pro-402–Gln-416. Residues His-417 to Ala-427 are compositionally biased toward low complexity.

As to quaternary structure, homo- and heterodimer with other ZFHD proteins.

It localises to the nucleus. Its function is as follows. Putative transcription factor. The protein is Zinc-finger homeodomain protein 7 (ZHD7) of Oryza sativa subsp. japonica (Rice).